The sequence spans 386 residues: GTPase Obg (386 aa).

Residues 1–159 (MKFVDEASIL…RELLLELMLL (159 aa)) form the Obg domain. The segment at 127-147 (NTRFKSSVNRTPRQKTNGTPG) is disordered. Residues 129–145 (RFKSSVNRTPRQKTNGT) are compositionally biased toward polar residues. Residues 160–333 (ADVGMLGMPN…LCWDVMTFII (174 aa)) enclose the OBG-type G domain. Residues 166-173 (GMPNAGKS), 191-195 (FTTLV), 213-216 (DIPG), 283-286 (NKID), and 314-316 (SAA) contribute to the GTP site. The Mg(2+) site is built by S173 and T193.

Belongs to the TRAFAC class OBG-HflX-like GTPase superfamily. OBG GTPase family. In terms of assembly, monomer. Mg(2+) is required as a cofactor.

Its subcellular location is the cytoplasm. Functionally, an essential GTPase which binds GTP, GDP and possibly (p)ppGpp with moderate affinity, with high nucleotide exchange rates and a fairly low GTP hydrolysis rate. Plays a role in control of the cell cycle, stress response, ribosome biogenesis and in those bacteria that undergo differentiation, in morphogenesis control. The sequence is that of GTPase Obg from Escherichia coli (strain UTI89 / UPEC).